A 290-amino-acid polypeptide reads, in one-letter code: Protease HtpX homolog (290 aa).

The next 2 helical transmembrane spans lie at 4-24 (IFLFIATNIAVIAVMSVVLSL) and 39-59 (PMLLVFSLVVGFTGSIISLLI). Zn(2+) is bound at residue His-144. Residue Glu-145 is part of the active site. A Zn(2+)-binding site is contributed by His-148. The next 2 helical transmembrane spans lie at 159 to 179 (LVQGVVNTFVVFLSRVVGYFV) and 197 to 217 (ITVIVSQIVFGIAASVIVAWF). Glu-222 contacts Zn(2+).

The protein belongs to the peptidase M48B family. Zn(2+) is required as a cofactor.

Its subcellular location is the cell inner membrane. In Janthinobacterium sp. (strain Marseille) (Minibacterium massiliensis), this protein is Protease HtpX homolog.